Here is a 142-residue protein sequence, read N- to C-terminus: Succinate dehydrogenase subunit 6, mitochondrial (142 aa).

G2 bears the N-acetylglycine mark.

In terms of assembly, component of complex II composed of eight subunits in plants: four classical SDH subunits SDH1, SDH2, SDH3 and SDH4 (a flavoprotein (FP), an iron-sulfur protein (IP), and a cytochrome b composed of a large and a small subunit.), as well as four subunits unknown in mitochondria from bacteria and heterotrophic eukaryotes.

The protein resides in the mitochondrion inner membrane. Its pathway is carbohydrate metabolism; tricarboxylic acid cycle. The polypeptide is Succinate dehydrogenase subunit 6, mitochondrial (Arabidopsis thaliana (Mouse-ear cress)).